A 362-amino-acid chain; its full sequence is D-alanine--D-alanine ligase (362 aa).

An ATP-grasp domain is found at 134 to 345; it reads KILAQRAGVP…YPDLITRLIR (212 aa). 170-225 contributes to the ATP binding site; the sequence is GQLGTSNLFVKPSNQGSSVGITHVTDDSNYAEALAEAFKYDDKVLVEEGIVGTEVE. Asp298, Glu312, and Asn314 together coordinate Mg(2+).

The protein belongs to the D-alanine--D-alanine ligase family. Mg(2+) serves as cofactor. It depends on Mn(2+) as a cofactor.

It is found in the cytoplasm. It carries out the reaction 2 D-alanine + ATP = D-alanyl-D-alanine + ADP + phosphate + H(+). Its pathway is cell wall biogenesis; peptidoglycan biosynthesis. Its function is as follows. Cell wall formation. The sequence is that of D-alanine--D-alanine ligase from Lactobacillus delbrueckii subsp. bulgaricus (strain ATCC 11842 / DSM 20081 / BCRC 10696 / JCM 1002 / NBRC 13953 / NCIMB 11778 / NCTC 12712 / WDCM 00102 / Lb 14).